We begin with the raw amino-acid sequence, 339 residues long: Uroporphyrinogen decarboxylase (339 aa).

Residues 23-27, Asp72, Tyr147, Ser202, and His315 each bind substrate; that span reads RQAGR.

The protein belongs to the uroporphyrinogen decarboxylase family. Homodimer.

Its subcellular location is the cytoplasm. It catalyses the reaction uroporphyrinogen III + 4 H(+) = coproporphyrinogen III + 4 CO2. It participates in porphyrin-containing compound metabolism; protoporphyrin-IX biosynthesis; coproporphyrinogen-III from 5-aminolevulinate: step 4/4. Its function is as follows. Catalyzes the decarboxylation of four acetate groups of uroporphyrinogen-III to yield coproporphyrinogen-III. In Desulfotalea psychrophila (strain LSv54 / DSM 12343), this protein is Uroporphyrinogen decarboxylase.